Here is a 233-residue protein sequence, read N- to C-terminus: Glucosamine-6-phosphate deaminase (233 aa).

The active-site Proton acceptor; for enolization step is Asp62. The active-site For ring-opening step is Asn128. The active-site Proton acceptor; for ring-opening step is His130. Catalysis depends on Glu135, which acts as the For ring-opening step.

This sequence belongs to the glucosamine/galactosamine-6-phosphate isomerase family. NagB subfamily.

It carries out the reaction alpha-D-glucosamine 6-phosphate + H2O = beta-D-fructose 6-phosphate + NH4(+). It functions in the pathway amino-sugar metabolism; N-acetylneuraminate degradation; D-fructose 6-phosphate from N-acetylneuraminate: step 5/5. Functionally, catalyzes the reversible isomerization-deamination of glucosamine 6-phosphate (GlcN6P) to form fructose 6-phosphate (Fru6P) and ammonium ion. In Streptococcus pneumoniae serotype 4 (strain ATCC BAA-334 / TIGR4), this protein is Glucosamine-6-phosphate deaminase.